The sequence spans 130 residues: Small ribosomal subunit protein uS9 (130 aa).

The protein belongs to the universal ribosomal protein uS9 family.

The polypeptide is Small ribosomal subunit protein uS9 (Pseudomonas syringae pv. tomato (strain ATCC BAA-871 / DC3000)).